The following is a 452-amino-acid chain: Bifunctional protein GlmU (452 aa).

The pyrophosphorylase stretch occupies residues 1–226 (MKNIHAIILA…KFEIAGVNDK (226 aa)). UDP-N-acetyl-alpha-D-glucosamine is bound by residues 9-12 (LAAG), K23, Q73, 78-79 (GT), 100-102 (YGD), G137, E151, N166, and N224. Residue D102 coordinates Mg(2+). N224 is a binding site for Mg(2+). Residues 227–247 (VQLAELERIFQINQATQFMQQ) form a linker region. Residues 248 to 452 (GLSLKDPNRF…LKNWQRPTKK (205 aa)) are N-acetyltransferase. 2 residues coordinate UDP-N-acetyl-alpha-D-glucosamine: R330 and K348. H360 acts as the Proton acceptor in catalysis. The UDP-N-acetyl-alpha-D-glucosamine site is built by Y363 and N374. Acetyl-CoA is bound by residues A377, 383–384 (NY), S402, A420, and R437.

In the N-terminal section; belongs to the N-acetylglucosamine-1-phosphate uridyltransferase family. This sequence in the C-terminal section; belongs to the transferase hexapeptide repeat family. As to quaternary structure, homotrimer. Requires Mg(2+) as cofactor.

The protein resides in the cytoplasm. It carries out the reaction alpha-D-glucosamine 1-phosphate + acetyl-CoA = N-acetyl-alpha-D-glucosamine 1-phosphate + CoA + H(+). It catalyses the reaction N-acetyl-alpha-D-glucosamine 1-phosphate + UTP + H(+) = UDP-N-acetyl-alpha-D-glucosamine + diphosphate. Its pathway is nucleotide-sugar biosynthesis; UDP-N-acetyl-alpha-D-glucosamine biosynthesis; N-acetyl-alpha-D-glucosamine 1-phosphate from alpha-D-glucosamine 6-phosphate (route II): step 2/2. It functions in the pathway nucleotide-sugar biosynthesis; UDP-N-acetyl-alpha-D-glucosamine biosynthesis; UDP-N-acetyl-alpha-D-glucosamine from N-acetyl-alpha-D-glucosamine 1-phosphate: step 1/1. The protein operates within bacterial outer membrane biogenesis; LPS lipid A biosynthesis. Its function is as follows. Catalyzes the last two sequential reactions in the de novo biosynthetic pathway for UDP-N-acetylglucosamine (UDP-GlcNAc). The C-terminal domain catalyzes the transfer of acetyl group from acetyl coenzyme A to glucosamine-1-phosphate (GlcN-1-P) to produce N-acetylglucosamine-1-phosphate (GlcNAc-1-P), which is converted into UDP-GlcNAc by the transfer of uridine 5-monophosphate (from uridine 5-triphosphate), a reaction catalyzed by the N-terminal domain. This is Bifunctional protein GlmU from Ruthia magnifica subsp. Calyptogena magnifica.